Reading from the N-terminus, the 84-residue chain is MLRSIMRRFKSTNNLSKKPSDYYVVLCPKCYFVTSAEVSVAEYIEMHKNFNTKFADRCPNDFIVTNSKSWNNHENCSALFYPLC.

This is an uncharacterized protein from Lepidoptera (butterflies and moths).